Consider the following 119-residue polypeptide: V-type proton ATPase subunit F (119 aa).

Belongs to the V-ATPase F subunit family. In terms of assembly, V-ATPase is a heteromultimeric enzyme made up of two complexes: the ATP-hydrolytic V1 complex and the proton translocation V0 complex. The V1 complex consists of three catalytic AB heterodimers that form a heterohexamer, three peripheral stalks each consisting of EG heterodimers, one central rotor including subunits D and F, and the regulatory subunits C and H. The proton translocation complex V0 consists of the proton transport subunit a, a ring of proteolipid subunits c9c'', rotary subunit d, subunits e and f, and the accessory subunits ATP6AP1/Ac45 and ATP6AP2/PRR.

It is found in the cytoplasmic vesicle. The protein resides in the secretory vesicle. Its subcellular location is the synaptic vesicle membrane. It localises to the clathrin-coated vesicle membrane. Its function is as follows. Subunit of the V1 complex of vacuolar(H+)-ATPase (V-ATPase), a multisubunit enzyme composed of a peripheral complex (V1) that hydrolyzes ATP and a membrane integral complex (V0) that translocates protons. V-ATPase is responsible for acidifying and maintaining the pH of intracellular compartments and in some cell types, is targeted to the plasma membrane, where it is responsible for acidifying the extracellular environment. The chain is V-type proton ATPase subunit F (ATP6V1F) from Homo sapiens (Human).